The chain runs to 65 residues: Large ribosomal subunit protein bL35 (65 aa).

Basic residues predominate over residues methionine 1–alanine 11. Disordered regions lie at residues methionine 1–arginine 24 and arginine 41–alanine 65.

Belongs to the bacterial ribosomal protein bL35 family.

In Nitratidesulfovibrio vulgaris (strain DSM 19637 / Miyazaki F) (Desulfovibrio vulgaris), this protein is Large ribosomal subunit protein bL35.